Reading from the N-terminus, the 208-residue chain is ATP synthase subunit beta, chloroplastic (208 aa).

This sequence belongs to the ATPase alpha/beta chains family. As to quaternary structure, F-type ATPases have 2 components, CF(1) - the catalytic core - and CF(0) - the membrane proton channel. CF(1) has five subunits: alpha(3), beta(3), gamma(1), delta(1), epsilon(1). CF(0) has four main subunits: a(1), b(1), b'(1) and c(9-12).

It localises to the plastid. The protein resides in the chloroplast thylakoid membrane. It catalyses the reaction ATP + H2O + 4 H(+)(in) = ADP + phosphate + 5 H(+)(out). Functionally, produces ATP from ADP in the presence of a proton gradient across the membrane. The catalytic sites are hosted primarily by the beta subunits. The protein is ATP synthase subunit beta, chloroplastic (atpB) of Hypolepis hostilis (Fern).